The following is a 790-amino-acid chain: Cadherin-6 (790 aa).

An N-terminal signal peptide occupies residues 1–30 (MRTYHCFWLLFWAGQPHQSFLTLLSKRTSG). Positions 31–53 (FPEKEKVLVLSGNSRRDLSRSKR) are excised as a propeptide. Cadherin domains are found at residues 54 to 159 (SWMW…EPMF), 160 to 268 (TKDV…PPRF), 269 to 383 (PQST…PPVF), 384 to 486 (SRPA…DNAP), and 487 to 608 (EFAM…LIHP). The Extracellular portion of the chain corresponds to 54 to 615 (SWMWNQFFLL…IHPTGLSTGA (562 aa)). Residues asparagine 165 and asparagine 255 are each glycosylated (N-linked (GlcNAc...) asparagine). The interval 261–289 (VNDNPPRFPQSTYQFRAPESTPPDSPIGR) is disordered. 3 N-linked (GlcNAc...) asparagine glycosylation sites follow: asparagine 437, asparagine 455, and asparagine 536. Residues 616–636 (LIAILLCIIILLVTVVLFAAL) traverse the membrane as a helical segment. Residues 637–790 (RRQRKKEPLI…YGSMDSDKDS (154 aa)) are Cytoplasmic-facing.

Its subcellular location is the cell membrane. Functionally, cadherins are calcium-dependent cell adhesion proteins. They preferentially interact with themselves in a homophilic manner in connecting cells; cadherins may thus contribute to the sorting of heterogeneous cell types. The protein is Cadherin-6 (CDH6) of Gallus gallus (Chicken).